A 461-amino-acid chain; its full sequence is Coronin-1A (461 aa).

Position 2 is an N-acetylserine (Ser-2). Ser-2 is modified (phosphoserine; by PKC). 7 WD repeats span residues 13 to 63 (HVFG…LVLP), 73 to 110 (NVPL…MVWE), 123 to 160 (PVVT…LVWD), 164 to 204 (GAAV…RVIE), 207 to 251 (KGTV…ALWD), 258 to 296 (PLSL…RYFE), and 302 to 349 (PFLH…EPIA). The span at 407 to 418 (NRGLDSARRRAT) shows a compositional bias: basic and acidic residues. Residues 407–431 (NRGLDSARRRATPEPSSTLSSDTVS) are disordered. Ser-412 is modified (phosphoserine; by PKC). Thr-418 bears the Phosphothreonine mark. Residues 420–430 (EPSSTLSSDTV) show a composition bias toward polar residues. Phosphoserine is present on Ser-422. A coiled-coil region spans residues 425 to 461 (LSSDTVSRLEEDVRNLNAIVQKLQERLDRLEETVQAK).

Belongs to the WD repeat coronin family. In terms of assembly, binds actin. Phosphorylation at Ser-412 by PKC strongly down-regulates the association with actin. In terms of processing, polyubiquitinated by RNF128 with 'Lys-48'-linked chains, leading to proteasomal degradation.

The protein resides in the cytoplasm. Its subcellular location is the cytoskeleton. The protein localises to the cell cortex. It is found in the cytoplasmic vesicle. It localises to the phagosome membrane. In terms of biological role, may be a crucial component of the cytoskeleton of highly motile cells, functioning both in the invagination of large pieces of plasma membrane, as well as in forming protrusions of the plasma membrane involved in cell locomotion. The chain is Coronin-1A (Coro1a) from Rattus norvegicus (Rat).